The primary structure comprises 294 residues: MFRGAASAVITPFKGNEIDYDSFDKFLKFQLDSGINGLIVLGTTGEAPTVTSEERREIISFAVKKVGGRVPVIIGTGSNSTAHSIELSQEAFELGADGVLVVTPYYNKPTQEGLYRHYEAIAKSVPGHVIIYNVPGRTGIDIIPETVLRCAQIENIVGIKEASGNQAQVDELLRLKAKVRPEFKIWSGNDDQAFHLVCSGGDGVISVLSNVAPSQTVEMIAAALEGDLEKAREIHLKLFPLMKALFIETNPIPVKFATHLLGFGSETLRLPLTEASKRTREVVKKAMQDCGVLR.

Threonine 44 is a pyruvate binding site. The active-site Proton donor/acceptor is tyrosine 132. Residue lysine 160 is the Schiff-base intermediate with substrate of the active site. Isoleucine 205 contributes to the pyruvate binding site.

This sequence belongs to the DapA family. In terms of assembly, homotetramer; dimer of dimers.

Its subcellular location is the cytoplasm. The catalysed reaction is L-aspartate 4-semialdehyde + pyruvate = (2S,4S)-4-hydroxy-2,3,4,5-tetrahydrodipicolinate + H2O + H(+). It functions in the pathway amino-acid biosynthesis; L-lysine biosynthesis via DAP pathway; (S)-tetrahydrodipicolinate from L-aspartate: step 3/4. In terms of biological role, catalyzes the condensation of (S)-aspartate-beta-semialdehyde [(S)-ASA] and pyruvate to 4-hydroxy-tetrahydrodipicolinate (HTPA). The polypeptide is 4-hydroxy-tetrahydrodipicolinate synthase (Kosmotoga olearia (strain ATCC BAA-1733 / DSM 21960 / TBF 19.5.1)).